Here is a 567-residue protein sequence, read N- to C-terminus: Multidrug and toxin extrusion protein 1 (567 aa).

The residue at position 1 (M1) is an N-acetylmethionine. Topologically, residues 1 to 37 (MERTEESAPGPGGADAASERRGLRCLLLPGFLEELRA) are cytoplasmic. S18 bears the Phosphoserine mark. A helical transmembrane segment spans residues 38-58 (LLVLAGPAFLAQLMMFLISFI). The Extracellular portion of the chain corresponds to 59–72 (SSVFCGHLGKLELD). A helical membrane pass occupies residues 73–93 (AVTLAIAVINVTGISVGHGLS). Topologically, residues 94-120 (SACDTLISQTYGSQNLKHVGVILQRGT) are cytoplasmic. Residues 121–141 (LILLLCCFPCWALFINTEQIL) form a helical membrane-spanning segment. Residues 142 to 152 (LLFRQDPDVSR) are Extracellular-facing. A helical membrane pass occupies residues 153–173 (LTQTYVMIFIPALPAAFLYTL). Over 174–187 (QVKYLLNQGIVLPQ) the chain is Cytoplasmic. Residues 188-208 (IMTGIAANLVNALANYVFLYH) traverse the membrane as a helical segment. Topologically, residues 209–216 (LHLGVMGS) are extracellular. The chain crosses the membrane as a helical span at residues 217–237 (ALANTISQFALAIFLFLYILW). Residues 238–257 (RRLHQATWGGWSWECLQDWA) lie on the Cytoplasmic side of the membrane. A helical membrane pass occupies residues 258–277 (SFLRLAIPSMLMLCIEWWAY). Topologically, residues 278–295 (EVGSFLSGILGMVELGAQ) are extracellular. The helical transmembrane segment at 296 to 316 (SITYELAIIVYMIPSGFSVAA) threads the bilayer. The Cytoplasmic segment spans residues 317 to 336 (NVRVGNALGAGNIDQAKKSS). The chain crosses the membrane as a helical span at residues 337–357 (AISLIVTELFAVTFCVLLLGC). Residues 358–370 (KDLVGYIFTTDRD) are Extracellular-facing. Residues 371–391 (IVALVAQVIPIYAVSHLFEGL) traverse the membrane as a helical segment. At 392–408 (ACTCGGILRGTGNQKVG) the chain is on the cytoplasmic side. The helical transmembrane segment at 409 to 429 (AIVNAIGYYVIGLPIGIALMF) threads the bilayer. Topologically, residues 430–437 (AAKLGVIG) are extracellular. A helical transmembrane segment spans residues 438-458 (LWSGIIICTTCQTTCFLAFIA). Over 459 to 543 (RLNWKRACQQ…LSGKQLALRR (85 aa)) the chain is Cytoplasmic. Residues 544 to 564 (GLLLLGVVLVLVGGILVRVYI) traverse the membrane as a helical segment. Residues 565–567 (RIE) lie on the Extracellular side of the membrane.

Belongs to the multi antimicrobial extrusion (MATE) (TC 2.A.66.1) family. As to expression, predominantly expressed in kidney and liver. Also expressed in various cells, including brain glia-like cells and capillaries, pancreatic duct cells, urinary bladder epithelium, adrenal gland cortex, heart, stomach, small intestine, thyroid gland, testes, alpha cells of the islets of Langerhans, Leydig cells, and vitamin A-storing Ito cells. Expressed in heart, stomach, small intestine, bladder, thyroid gland, adrenal gland and testes (at protein level).

It localises to the cell membrane. Its subcellular location is the apical cell membrane. It carries out the reaction thiamine(out) + H(+)(in) = thiamine(in) + H(+)(out). The enzyme catalyses estrone 3-sulfate(in) + H(+)(out) = estrone 3-sulfate(out) + H(+)(in). It catalyses the reaction creatinine(in) + H(+)(out) = creatinine(out) + H(+)(in). The catalysed reaction is agmatine(in) + H(+)(out) = agmatine(out) + H(+)(in). Its function is as follows. Multidrug efflux pump that functions as a H(+)/organic cation antiporter. Plays a physiological role in the excretion of cationic compounds including endogenous metabolites, drugs, toxins through the kidney and liver, into urine and bile respectively. Mediates the efflux of endogenous compounds such as creatinine, vitamin B1/thiamine, agmatine and estrone-3-sulfate. May also contribute to regulate the transport of cationic compounds in testis across the blood-testis-barrier. This chain is Multidrug and toxin extrusion protein 1 (Slc47a1), found in Mus musculus (Mouse).